The following is a 155-amino-acid chain: MLKKKKTEVYALGQHISMSADKARRVIDQIRGRSYEETLIILELMPYRACYPIFKLVYSAAANASYNMSSNDANLLISKAEVNEGTTIKKFKPRARGRSYPIKRPTCHITIVMKDISLDDEYVKINSLKKPRWKNKHTAMVYHDMYSSGGVWDKK.

Belongs to the universal ribosomal protein uL22 family. As to quaternary structure, part of the 50S ribosomal subunit.

It localises to the plastid. It is found in the chloroplast. Functionally, this protein binds specifically to 23S rRNA. In terms of biological role, the globular domain of the protein is located near the polypeptide exit tunnel on the outside of the subunit, while an extended beta-hairpin is found that lines the wall of the exit tunnel in the center of the 70S ribosome. The polypeptide is Large ribosomal subunit protein uL22c (rpl22) (Coffea arabica (Arabian coffee)).